We begin with the raw amino-acid sequence, 109 residues long: MSAQPVDIQIFGRSLRVNCPPDQRDALNQAADDLNQRLQDLKVRTRVTNTEQLVFIAALNISYELTQEKAKTRDYAASMEQRIRMLQQTIEQALLDQGRITEKTGQNFE.

Positions 21–97 (PDQRDALNQA…QTIEQALLDQ (77 aa)) form a coiled coil.

It belongs to the ZapA family. Type 1 subfamily. Homodimer. Interacts with FtsZ.

It is found in the cytoplasm. Functionally, activator of cell division through the inhibition of FtsZ GTPase activity, therefore promoting FtsZ assembly into bundles of protofilaments necessary for the formation of the division Z ring. It is recruited early at mid-cell but it is not essential for cell division. The polypeptide is Cell division protein ZapA (Salmonella agona (strain SL483)).